A 138-amino-acid chain; its full sequence is Basic phospholipase A2 chain HDP-1P (138 aa).

Positions 1–16 (MRILWIVAVCLIGVEG) are cleaved as a signal peptide. 7 disulfide bridges follow: Cys42–Cys131, Cys44–Cys60, Cys59–Cys111, Cys65–Cys138, Cys66–Cys104, Cys73–Cys97, and Cys91–Cys102. Positions 43, 45, and 47 each coordinate Ca(2+). The active site involves His63. A Ca(2+)-binding site is contributed by Asp64. Asp105 is a catalytic residue.

As to quaternary structure, heterodimer; non-covalently linked. The toxic basic protein has phospholipase A2 activity (chain HDP-1P) and the non-toxic acidic protein functions as its inhibitor (chain HPD-1I (AC A4VBF0)). Requires Ca(2+) as cofactor. In terms of tissue distribution, expressed by the venom gland.

The protein localises to the secreted. The enzyme catalyses a 1,2-diacyl-sn-glycero-3-phosphocholine + H2O = a 1-acyl-sn-glycero-3-phosphocholine + a fatty acid + H(+). Enzymatic activity and neurotoxicity are inhibited by Triton X-100, which has been determined to be located in the center of the hydrophobic channel of the enzyme. In terms of biological role, heterodimer: shows the same activities as the monomer, but with a lower potency. Monomer: snake venom phospholipase A2 (PLA2) that shows presynaptic neurotoxicity, anticoagulant activity and that weakly inhibits ADP-induced platelet aggregation. Inhibits exocytosis in pancreatic beta cells, confirming it can act presynaptically in inhibiting the exocytosis of neurotransmitters in neurons. PLA2 catalyzes the calcium-dependent hydrolysis of the 2-acyl groups in 3-sn-phosphoglycerides. The polypeptide is Basic phospholipase A2 chain HDP-1P (Vipera nikolskii (Nikolsky's adder)).